The primary structure comprises 953 residues: Coatomer subunit beta (953 aa).

The residue at position 2 (T2) is an N-acetylthreonine. HEAT repeat units lie at residues 96 to 131 (HEMILVCDAYRKDLQHPNEFIRGSTLRFLCKLKEAE), 132 to 168 (LLEPLMPAIRACLEHRHSYVRRNAVLAIYTIYRNFEH), 240 to 276 (SERARFIRCIYNLLQSSSPAVKYEAAGTLVTLSSAPT), 277 to 314 (AIKAAAQCYIDLIIKESDNNVKLIVLDRLIELKEHPAH), 316 to 353 (RVLQDLVMDILRVLSTPDLEVRKKTLQLALDLVSSRNV), and 396 to 433 (DMAANVIPVLMEFLSDNNEAAAADVLEFVREAIQRFDN). K494 bears the N6-acetyllysine mark.

In terms of assembly, oligomeric complex that consists of at least the alpha, beta, beta', gamma, delta, epsilon and zeta subunits. Interacts (via C-terminus) with HIV-1 Nef; the interaction is direct. Interacts with CAPN8 and PRKCE. Interacts with SCYL1. Interacts with COPG1. Interacts with ARF1 (myristoylated); this interaction is required for binding of COPB1 to Golgi membranes. Interacts (via trunk domain) with ARF1 (via switch I region); the interaction is direct. Interacts with KCNK2 (via N-terminus); this interaction increases the channel-mediated whole cell currents and promotes plasma membrane expression of KCNK2. Interacts with anthrax lethal factor (LF); this interaction may facilitate endosomal vesicle membrane translocation of LF and its release from the lumen of endosomal vesicles to external milieu. Interacts with STX17. Interacts with TMEM115. Interacts with TMEM41B.

It localises to the cytoplasm. It is found in the golgi apparatus membrane. The protein resides in the cytoplasmic vesicle. The protein localises to the COPI-coated vesicle membrane. Its subcellular location is the cell membrane. It localises to the endoplasmic reticulum-Golgi intermediate compartment. The coatomer is a cytosolic protein complex that binds to dilysine motifs and reversibly associates with Golgi non-clathrin-coated vesicles, which further mediate biosynthetic protein transport from the ER, via the Golgi up to the trans Golgi network. Coatomer complex is required for budding from Golgi membranes, and is essential for the retrograde Golgi-to-ER transport of dilysine-tagged proteins. In mammals, the coatomer can only be recruited by membranes associated to ADP-ribosylation factors (ARFs), which are small GTP-binding proteins; the complex also influences the Golgi structural integrity, as well as the processing, activity, and endocytic recycling of LDL receptors. Plays a functional role in facilitating the transport of kappa-type opioid receptor mRNAs into axons and enhances translation of these proteins. Required for limiting lipid storage in lipid droplets. Involved in lipid homeostasis by regulating the presence of perilipin family members PLIN2 and PLIN3 at the lipid droplet surface and promoting the association of adipocyte surface triglyceride lipase (PNPLA2) with the lipid droplet to mediate lipolysis. Involved in the Golgi disassembly and reassembly processes during cell cycle. Involved in autophagy by playing a role in early endosome function. Plays a role in organellar compartmentalization of secretory compartments including endoplasmic reticulum (ER)-Golgi intermediate compartment (ERGIC), Golgi, trans-Golgi network (TGN) and recycling endosomes, and in biosynthetic transport of CAV1. Promotes degradation of Nef cellular targets CD4 and MHC class I antigens by facilitating their trafficking to degradative compartments. The sequence is that of Coatomer subunit beta (COPB1) from Pongo abelii (Sumatran orangutan).